The following is a 243-amino-acid chain: Exosome complex component Rrp41 (243 aa).

Belongs to the RNase PH family. Rrp41 subfamily. In terms of assembly, component of the archaeal exosome complex. Forms a hexameric ring-like arrangement composed of 3 Rrp41-Rrp42 heterodimers. The hexameric ring associates with a trimer of Rrp4 and/or Csl4 subunits.

It is found in the cytoplasm. Functionally, catalytic component of the exosome, which is a complex involved in RNA degradation. Has 3'-&gt;5' exoribonuclease activity. Can also synthesize heteromeric RNA-tails. The chain is Exosome complex component Rrp41 from Sulfolobus acidocaldarius (strain ATCC 33909 / DSM 639 / JCM 8929 / NBRC 15157 / NCIMB 11770).